The sequence spans 932 residues: Protein translocase subunit SecA (932 aa).

ATP-binding positions include Gln86, 104-108 (GEGKT), and Asp494. The segment at 857–932 (EDAGAEAHAS…KPAPKRKKRR (76 aa)) is disordered. Positions 905-915 (TAGSAGDSNLP) are enriched in polar residues. A compositionally biased stretch (basic residues) spans 920–932 (KTNKPAPKRKKRR).

Belongs to the SecA family. Monomer and homodimer. Part of the essential Sec protein translocation apparatus which comprises SecA, SecYEG and auxiliary proteins SecDF. Other proteins may also be involved.

The protein localises to the cell membrane. It is found in the cytoplasm. It catalyses the reaction ATP + H2O + cellular proteinSide 1 = ADP + phosphate + cellular proteinSide 2.. Functionally, part of the Sec protein translocase complex. Interacts with the SecYEG preprotein conducting channel. Has a central role in coupling the hydrolysis of ATP to the transfer of proteins into and across the cell membrane, serving as an ATP-driven molecular motor driving the stepwise translocation of polypeptide chains across the membrane. This Renibacterium salmoninarum (strain ATCC 33209 / DSM 20767 / JCM 11484 / NBRC 15589 / NCIMB 2235) protein is Protein translocase subunit SecA.